The sequence spans 605 residues: Beta-conglycinin alpha subunit 1 (605 aa).

The N-terminal stretch at 1–22 is a signal peptide; sequence MMRARFPLLLLGLVFLASVSVS. The propeptide occupies 23 to 62; that stretch reads FGIAYWEKENPKHNKCLQSCNSERDSYRNQACHARCNLLK. The interval 65-195 is disordered; sequence KEECEEGEIP…ELRRHKNKNP (131 aa). Residues 111–136 show a composition bias toward basic and acidic residues; sequence PRQEEEHEQREEQEWPRKEEKRGEKG. Acidic residues-rich tracts occupy residues 137-149 and 169-184; these read SEEE…EEQD and EDED…ESED. Cupin type-1 domains lie at 196 to 354 and 406 to 567; these read FLFG…EEIN and FNLR…QAVE. 2 N-linked (GlcNAc...) asparagine glycosylation sites follow: Asn-261 and Asn-517.

This sequence belongs to the 7S seed storage protein family. As to quaternary structure, the alpha-, alpha'-, and beta-subunits associate in various combinations to form trimeric proteins.

Its subcellular location is the vacuole. The protein localises to the aleurone grain. The protein resides in the endoplasmic reticulum. It is found in the protein storage vacuole. Seed storage protein. Accumulates during seed development and is hydrolyzed after germination to provide a carbon and nitrogen source for the developing seedling. The protein is Beta-conglycinin alpha subunit 1 of Glycine max (Soybean).